Reading from the N-terminus, the 194-residue chain is SRP-independent targeting protein 3 homolog (194 aa).

2 helical membrane passes run 43–63 (ILYATVNIVQIGIFLYTKIII) and 110–130 (LVTIATTLFMHLYMGYAPPLL).

The protein belongs to the PHO88 family.

It localises to the endoplasmic reticulum membrane. Functionally, may function in a SRP (signal recognition particle) and GET (guided entry of tail-anchored proteins) independent pathway for targeting a broad range of substrate proteins to the endoplasmic reticulum. Involved in inorganic phosphate uptake. Also involved in telomere length regulation and maintenance. This chain is SRP-independent targeting protein 3 homolog, found in Schizosaccharomyces pombe (strain 972 / ATCC 24843) (Fission yeast).